Consider the following 132-residue polypeptide: Z-ring associated protein G (132 aa).

A helical membrane pass occupies residues 1–21 (MTWEYALIGLVVGIIIGAVAM). The segment at 95–132 (FRNRLAESEASNDQAPVQMPRDYSEGASGLLRTGAKRD) is disordered.

It belongs to the ZapG family.

The protein localises to the cell inner membrane. In terms of biological role, involved in cell division, cell envelope biogenesis and cell shape maintenance. The chain is Z-ring associated protein G from Escherichia coli O157:H7.